A 290-amino-acid chain; its full sequence is Poly-beta-1,6-N-acetyl-D-glucosamine N-deacetylase (290 aa).

The first 28 residues, 1–28 (MKYRKFIILVLSILIILPVSTLDGHHIA), serve as a signal peptide directing secretion. Positions 114–290 (RSVWINFDDM…KRWDGFHEKD (177 aa)) constitute a NodB homology domain.

The protein belongs to the polysaccharide deacetylase family.

It is found in the secreted. The protein resides in the cell wall. Its function is as follows. Catalyzes the N-deacetylation of poly-beta-1,6-N-acetyl-D-glucosamine (PNAG, also referred to as PIA), a biofilm adhesin polysaccharide. N-deacetylation is crucial for attachment of the polysaccharide to the bacterial cell surface; it leads to the introduction of positive charges in the otherwise neutral PIA polymer, allowing electrostatic interactions. This chain is Poly-beta-1,6-N-acetyl-D-glucosamine N-deacetylase (icaB), found in Staphylococcus aureus (strain NCTC 8325 / PS 47).